The following is a 141-amino-acid chain: D-aminoacyl-tRNA deacylase (141 aa).

A Gly-cisPro motif, important for rejection of L-amino acids motif is present at residues Gly133–Pro134.

It belongs to the DTD family. Homodimer.

The protein localises to the cytoplasm. The catalysed reaction is glycyl-tRNA(Ala) + H2O = tRNA(Ala) + glycine + H(+). It catalyses the reaction a D-aminoacyl-tRNA + H2O = a tRNA + a D-alpha-amino acid + H(+). An aminoacyl-tRNA editing enzyme that deacylates mischarged D-aminoacyl-tRNAs. Also deacylates mischarged glycyl-tRNA(Ala), protecting cells against glycine mischarging by AlaRS. Acts via tRNA-based rather than protein-based catalysis; rejects L-amino acids rather than detecting D-amino acids in the active site. By recycling D-aminoacyl-tRNA to D-amino acids and free tRNA molecules, this enzyme counteracts the toxicity associated with the formation of D-aminoacyl-tRNA entities in vivo and helps enforce protein L-homochirality. In Kineococcus radiotolerans (strain ATCC BAA-149 / DSM 14245 / SRS30216), this protein is D-aminoacyl-tRNA deacylase.